The primary structure comprises 202 residues: Probable thymidylate kinase (202 aa).

13 to 20 (GIDGSGKT) is an ATP binding site.

It belongs to the thymidylate kinase family.

The enzyme catalyses dTMP + ATP = dTDP + ADP. In Picrophilus torridus (strain ATCC 700027 / DSM 9790 / JCM 10055 / NBRC 100828 / KAW 2/3), this protein is Probable thymidylate kinase.